A 164-amino-acid chain; its full sequence is Putative protein ZNF321 (164 aa).

This chain is Putative protein ZNF321 (ZNF321P), found in Homo sapiens (Human).